Reading from the N-terminus, the 259-residue chain is 5'-nucleotidase SurE (259 aa).

A divalent metal cation is bound by residues Asp-8, Asp-9, Ser-40, and Asn-95.

It belongs to the SurE nucleotidase family. The cofactor is a divalent metal cation.

Its subcellular location is the cytoplasm. It carries out the reaction a ribonucleoside 5'-phosphate + H2O = a ribonucleoside + phosphate. Its function is as follows. Nucleotidase that shows phosphatase activity on nucleoside 5'-monophosphates. The sequence is that of 5'-nucleotidase SurE from Oleidesulfovibrio alaskensis (strain ATCC BAA-1058 / DSM 17464 / G20) (Desulfovibrio alaskensis).